The primary structure comprises 106 residues: Small ribosomal subunit protein uS10 (106 aa).

Belongs to the universal ribosomal protein uS10 family. In terms of assembly, part of the 30S ribosomal subunit.

In terms of biological role, involved in the binding of tRNA to the ribosomes. This chain is Small ribosomal subunit protein uS10, found in Archaeoglobus fulgidus (strain ATCC 49558 / DSM 4304 / JCM 9628 / NBRC 100126 / VC-16).